The primary structure comprises 164 residues: CDP-archaeol synthase (164 aa).

4 helical membrane passes run 3-23, 51-71, 77-97, and 122-142; these read LLYFFLLIWPPYVANGSAVLA, YEGFLIGLSTGTFIGYAPNLL, LLDAFVLSIAALLGDLFGAFI, and LAVYTLYKDISVEYIIAAVII.

The protein belongs to the CDP-archaeol synthase family. Requires Mg(2+) as cofactor.

The protein resides in the cell membrane. The catalysed reaction is 2,3-bis-O-(geranylgeranyl)-sn-glycerol 1-phosphate + CTP + H(+) = CDP-2,3-bis-O-(geranylgeranyl)-sn-glycerol + diphosphate. The protein operates within membrane lipid metabolism; glycerophospholipid metabolism. Catalyzes the formation of CDP-2,3-bis-(O-geranylgeranyl)-sn-glycerol (CDP-archaeol) from 2,3-bis-(O-geranylgeranyl)-sn-glycerol 1-phosphate (DGGGP) and CTP. This reaction is the third ether-bond-formation step in the biosynthesis of archaeal membrane lipids. The sequence is that of CDP-archaeol synthase from Pyrobaculum islandicum (strain DSM 4184 / JCM 9189 / GEO3).